Here is a 723-residue protein sequence, read N- to C-terminus: Tripartite motif-containing protein 42 (723 aa).

An RING-type zinc finger spans residues 146–192; it reads CPMCSRLRLHSFMLPCNHSLCEKCLRQLQKHAEVTENFFILICPVCD. 2 B box-type zinc fingers span residues 235–280 and 285–326; these read PILC…FVDT and QDEK…TISL. Zn(2+) contacts are provided by C290, H293, C313, and H318. Positions 382–407 form a coiled coil; the sequence is KLRSILQEKEKIIMEQIENLEVSRQK. A COS domain is found at 434 to 492; that stretch reads LKETGQVAFLQSAKILVDQIEDGIQTTYRPDPQLRLHSINYVPLDFVELSSAIHELFPT. One can recognise a Fibronectin type-III domain in the interval 603-701; sequence TPGPIVIYQT…DICKVVTPDG (99 aa).

The protein belongs to the TRIM/RBCC family.

This Homo sapiens (Human) protein is Tripartite motif-containing protein 42 (TRIM42).